A 199-amino-acid chain; its full sequence is Protein Maeo_0138 (199 aa).

Residues 7 to 197 (EEGKFAVKFA…ELSPNGKIVE (191 aa)) enclose the AMMECR1 domain.

This is Protein Maeo_0138 from Methanococcus aeolicus (strain ATCC BAA-1280 / DSM 17508 / OCM 812 / Nankai-3).